Reading from the N-terminus, the 24-residue chain is Humanin-like 11 (24 aa).

The protein belongs to the humanin family.

It localises to the secreted. Its subcellular location is the cytoplasm. In terms of biological role, plays a role as a neuroprotective and antiapoptotic factor. In Homo sapiens (Human), this protein is Humanin-like 11.